The primary structure comprises 440 residues: Chromosome partition protein MukF (440 aa).

The leucine-zipper stretch occupies residues 208 to 236; the sequence is LSETSGTLRELQDTLEAAGDKLQANLLRI.

Belongs to the MukF family. Interacts, and probably forms a ternary complex, with MukE and MukB via its C-terminal region. The complex formation is stimulated by calcium or magnesium. It is required for an interaction between MukE and MukB.

The protein localises to the cytoplasm. It localises to the nucleoid. Functionally, involved in chromosome condensation, segregation and cell cycle progression. May participate in facilitating chromosome segregation by condensation DNA from both sides of a centrally located replisome during cell division. Not required for mini-F plasmid partitioning. Probably acts via its interaction with MukB and MukE. Overexpression results in anucleate cells. It has a calcium binding activity. This is Chromosome partition protein MukF from Escherichia coli O9:H4 (strain HS).